We begin with the raw amino-acid sequence, 458 residues long: Monomethylamine methyltransferase MtmB2 (458 aa).

O202 is a non-standard amino acid (pyrrolysine).

The protein belongs to the monomethylamine methyltransferase family. In terms of assembly, can form a complex with MtmC (MtmC1 or MtmC2).

It catalyses the reaction Co(I)-[methylamine-specific corrinoid protein] + methylamine + H(+) = methyl-Co(III)-[methylamine-specific corrinoid protein] + NH4(+). The protein operates within one-carbon metabolism; methanogenesis from methylamine. Its function is as follows. Catalyzes the transfer of the methyl group from monomethylamine to the corrinoid cofactor of MtmC (MtmC1 or MtmC2). This Methanosarcina barkeri protein is Monomethylamine methyltransferase MtmB2 (mtmB2).